Consider the following 222-residue polypeptide: Protein-L-isoaspartate O-methyltransferase (222 aa).

S67 is a catalytic residue.

Belongs to the methyltransferase superfamily. L-isoaspartyl/D-aspartyl protein methyltransferase family.

The protein resides in the cytoplasm. The enzyme catalyses [protein]-L-isoaspartate + S-adenosyl-L-methionine = [protein]-L-isoaspartate alpha-methyl ester + S-adenosyl-L-homocysteine. Catalyzes the methyl esterification of L-isoaspartyl residues in peptides and proteins that result from spontaneous decomposition of normal L-aspartyl and L-asparaginyl residues. It plays a role in the repair and/or degradation of damaged proteins. This is Protein-L-isoaspartate O-methyltransferase from Parvibaculum lavamentivorans (strain DS-1 / DSM 13023 / NCIMB 13966).